The sequence spans 325 residues: Probable exonuclease subunit 1 (325 aa).

In terms of assembly, could consist of two subunits: D13 and D12.

Functionally, possible exonuclease involved in phage DNA recombination, replication, and repair. This Escherichia coli (Enterobacteria phage T5) protein is Probable exonuclease subunit 1 (D12).